The primary structure comprises 269 residues: Ubiquinone/menaquinone biosynthesis C-methyltransferase UbiE (269 aa).

Residues Thr92, Asp113, and 141–142 (NA) contribute to the S-adenosyl-L-methionine site.

Belongs to the class I-like SAM-binding methyltransferase superfamily. MenG/UbiE family.

It catalyses the reaction a 2-demethylmenaquinol + S-adenosyl-L-methionine = a menaquinol + S-adenosyl-L-homocysteine + H(+). The enzyme catalyses a 2-methoxy-6-(all-trans-polyprenyl)benzene-1,4-diol + S-adenosyl-L-methionine = a 5-methoxy-2-methyl-3-(all-trans-polyprenyl)benzene-1,4-diol + S-adenosyl-L-homocysteine + H(+). It functions in the pathway quinol/quinone metabolism; menaquinone biosynthesis; menaquinol from 1,4-dihydroxy-2-naphthoate: step 2/2. It participates in cofactor biosynthesis; ubiquinone biosynthesis. Functionally, methyltransferase required for the conversion of demethylmenaquinol (DMKH2) to menaquinol (MKH2) and the conversion of 2-polyprenyl-6-methoxy-1,4-benzoquinol (DDMQH2) to 2-polyprenyl-3-methyl-6-methoxy-1,4-benzoquinol (DMQH2). The chain is Ubiquinone/menaquinone biosynthesis C-methyltransferase UbiE from Brucella melitensis biotype 2 (strain ATCC 23457).